Reading from the N-terminus, the 535-residue chain is Estrogen receptor (535 aa).

The segment at 1–21 is disordered; that stretch reads SRMLTDPPRIGSMQSLGSSPT. Residues 1-104 form a modulating region; the sequence is SRMLTDPPRI…VFEMANETRY (104 aa). The span at 12–21 shows a compositional bias: polar residues; sequence SMQSLGSSPT. 2 NR C4-type zinc fingers span residues 105–125 and 141–165; these read CAVC…CEGC and CPAT…LRKC. Positions 105 to 170 form a DNA-binding region, nuclear receptor; it reads CAVCSDFASG…RLRKCYEVGM (66 aa). Positions 171-236 are hinge; it reads VKGGLRKDRG…GGWCGPRITM (66 aa). A disordered region spans residues 187 to 229; it reads DKRYCGPAGDREKPYGDLEHRTAPPQDGGRNSSSSSLSGGGGW. The span at 195–208 shows a compositional bias: basic and acidic residues; sequence GDREKPYGDLEHRT. The segment covering 214–223 has biased composition (low complexity); it reads GGRNSSSSSL. The 237-residue stretch at 237 to 473 folds into the NR LBD domain; the sequence is PPEQVLFLLQ…DLLLEMLDGH (237 aa). The interval 478–535 is disordered; sequence PGKVAQAGEQTEGPSTTTTTSTGSSIGPMRGSQDTHIRSPGSGVLQYGSPSSDQMPIP. The span at 492 to 502 shows a compositional bias: low complexity; that stretch reads STTTTTSTGSS. Over residues 525–535 the composition is skewed to polar residues; sequence GSPSSDQMPIP.

Belongs to the nuclear hormone receptor family. NR3 subfamily. Binds DNA as a homodimer. Can form a heterodimer with ER-beta. Highest expression in brain and liver.

Its subcellular location is the nucleus. Functionally, the steroid hormones and their receptors are involved in the regulation of eukaryotic gene expression and affect cellular proliferation and differentiation in target tissues. The protein is Estrogen receptor (esr1) of Salmo salar (Atlantic salmon).